The chain runs to 472 residues: Eukaryotic translation initiation factor 2 subunit 3, X-linked (472 aa).

Ala2 bears the N-acetylalanine mark. Residue Ser16 is modified to Phosphoserine. Residues 39-248 (QATINIGTIG…IVKKIPVPPR (210 aa)) form the tr-type G domain. The segment at 48–55 (GHVAHGKS) is G1. 51-56 (AHGKST) is a GTP binding site. The tract at residues 76–80 (NITIK) is G2. Residues 134–137 (DCPG) are G3. Residues 190–193 (NKID) and 225–227 (SAQ) each bind GTP. The G4 stretch occupies residues 190 to 193 (NKID). The G5 stretch occupies residues 225–227 (SAQ). The interval 457 to 469 (GQIRRGVTIKPTV) is interacts with Cdc123.

It belongs to the TRAFAC class translation factor GTPase superfamily. Classic translation factor GTPase family. EIF2G subfamily. In terms of assembly, eukaryotic translation initiation factor 2 eIF2 is a heterotrimeric complex composed of an alpha (EIF2S1), a beta (EIF2S2) and a gamma (EIF2S3) chain. eIF2 is member of the 43S pre-initiation complex (43S PIC). Interacts (via C-terminus) with CDC123; the interaction is direct. As to expression, widely expressed. In the brain, high mRNA levels are observed in specific regions, including the habenula, anterodorsal thalamic nucleus, hippocampus, hypothalamus, and cerebellum. Also expressed in the embryonic brain. There is a differential expression between males and females, which is tissue-specific. Females tend to have higher expression levels than males in the brain (cortex, hippocampus and paraventricular nucleus, but not in the habenula), as well as in other tissues. The up-regulation observed in females at the mRNA level may be due to the presence of 2 active copies of the gene.

The protein localises to the cytoplasm. It is found in the cytosol. It catalyses the reaction GTP + H2O = GDP + phosphate + H(+). In terms of biological role, member of the eIF2 complex that functions in the early steps of protein synthesis by forming a ternary complex with GTP and initiator tRNA. This complex binds to a 40S ribosomal subunit, followed by mRNA binding to form the 43S pre-initiation complex (43S PIC). Junction of the 60S ribosomal subunit to form the 80S initiation complex is preceded by hydrolysis of the GTP bound to eIF2 and release of an eIF2-GDP binary complex. In order for eIF2 to recycle and catalyze another round of initiation, the GDP bound to eIF2 must exchange with GTP by way of a reaction catalyzed by eIF-2B. Along with its paralog on chromosome Y, may contribute to spermatogenesis up to the round spermatid stage. The chain is Eukaryotic translation initiation factor 2 subunit 3, X-linked (Eif2s3x) from Mus musculus (Mouse).